The sequence spans 337 residues: Cytoskeleton protein RodZ (337 aa).

The Cytoplasmic portion of the chain corresponds to 1–111; the sequence is MNTEATHDQN…LGKRRKKRDG (111 aa). The HTH cro/C1-type domain occupies 19-71; the sequence is LRNAREQLGLSQQAVAERLCLKVSTVRDIEEDKAPADLASTFLRGYIRSYARL. Residues 30–49 constitute a DNA-binding region (H-T-H motif); it reads QQAVAERLCLKVSTVRDIEE. The helical; Signal-anchor for type II membrane protein transmembrane segment at 112–132 threads the bilayer; that stretch reads WLMTFTWLVLFVVIGLSGAWW. Residues 133-337 lie on the Periplasmic side of the membrane; the sequence is WQDHKAQQEE…TLNAEQSPAQ (205 aa). Residues 145–167 are compositionally biased toward polar residues; that stretch reads TMADQSSAELSSNSEQGQSVPLN. A disordered region spans residues 145 to 236; it reads TMADQSSAEL…TAATTPDGAA (92 aa). The segment covering 168–207 has biased composition (low complexity); sequence TSTTTDPATTSTPPASVDTTATNTQTPVVTAPAPAVDPQQ. Over residues 208–218 the composition is skewed to polar residues; the sequence is NAVVSPSQANV. The span at 219-236 shows a compositional bias: low complexity; that stretch reads DTAATPAPTAATTPDGAA.

It belongs to the RodZ family.

The protein localises to the cell inner membrane. Functionally, cytoskeletal protein that is involved in cell-shape control through regulation of the length of the long axis. The protein is Cytoskeleton protein RodZ of Escherichia coli O157:H7.